Here is a 122-residue protein sequence, read N- to C-terminus: Small ribosomal subunit protein uS13 (122 aa).

Residues 94–122 (RGLPVRGQKTKTNARTRKGPRKTVAGKRK) are disordered.

The protein belongs to the universal ribosomal protein uS13 family. Part of the 30S ribosomal subunit. Forms a loose heterodimer with protein S19. Forms two bridges to the 50S subunit in the 70S ribosome.

Its function is as follows. Located at the top of the head of the 30S subunit, it contacts several helices of the 16S rRNA. In the 70S ribosome it contacts the 23S rRNA (bridge B1a) and protein L5 of the 50S subunit (bridge B1b), connecting the 2 subunits; these bridges are implicated in subunit movement. Contacts the tRNAs in the A and P-sites. The sequence is that of Small ribosomal subunit protein uS13 from Syntrophotalea carbinolica (strain DSM 2380 / NBRC 103641 / GraBd1) (Pelobacter carbinolicus).